The primary structure comprises 282 residues: Probable endonuclease 4 (282 aa).

Residues His69, His109, Glu145, Asp179, His182, His216, Asp229, His231, and Glu261 each contribute to the Zn(2+) site.

It belongs to the AP endonuclease 2 family. Requires Zn(2+) as cofactor.

The catalysed reaction is Endonucleolytic cleavage to 5'-phosphooligonucleotide end-products.. In terms of biological role, endonuclease IV plays a role in DNA repair. It cleaves phosphodiester bonds at apurinic or apyrimidinic (AP) sites, generating a 3'-hydroxyl group and a 5'-terminal sugar phosphate. This chain is Probable endonuclease 4, found in Chlorobium chlorochromatii (strain CaD3).